We begin with the raw amino-acid sequence, 594 residues long: Aspartate--tRNA(Asp/Asn) ligase (594 aa).

E175 serves as a coordination point for L-aspartate. An aspartate region spans residues 199 to 202; it reads QIYK. Residues R221 and H454 each contribute to the L-aspartate site. Residue 221 to 223 participates in ATP binding; that stretch reads RDE. ATP is bound at residue E488. R495 serves as a coordination point for L-aspartate. 540-543 contributes to the ATP binding site; the sequence is GIDR.

The protein belongs to the class-II aminoacyl-tRNA synthetase family. Type 1 subfamily. As to quaternary structure, homodimer.

It localises to the cytoplasm. It catalyses the reaction tRNA(Asx) + L-aspartate + ATP = L-aspartyl-tRNA(Asx) + AMP + diphosphate. Its function is as follows. Aspartyl-tRNA synthetase with relaxed tRNA specificity since it is able to aspartylate not only its cognate tRNA(Asp) but also tRNA(Asn). Reaction proceeds in two steps: L-aspartate is first activated by ATP to form Asp-AMP and then transferred to the acceptor end of tRNA(Asp/Asn). The sequence is that of Aspartate--tRNA(Asp/Asn) ligase from Chelativorans sp. (strain BNC1).